Here is a 191-residue protein sequence, read N- to C-terminus: uncharacterized protein (191 aa).

A disordered region spans residues 52–112 (NKQENQTESS…TNKDTNIETN (61 aa)). The span at 57–70 (QTESSDLNNTDSLV) shows a compositional bias: polar residues. Residues 71–94 (DSNSDNQTNTTDTSTNNVENLNEN) are compositionally biased toward low complexity. Residues 138-172 (QDKISDTERIRFLEEKVSKLERKIRTLSLQMTKIS) adopt a coiled-coil conformation.

This is an uncharacterized protein from Acanthamoeba polyphaga mimivirus (APMV).